The following is a 434-amino-acid chain: Tol-Pal system protein TolB (434 aa).

The N-terminal stretch at 1–21 (MIVRRALALAALALAASPALA) is a signal peptide. The tract at residues 411-434 (GDRQTPVTSGKTDLAAPAWGPLAP) is disordered.

It belongs to the TolB family. As to quaternary structure, the Tol-Pal system is composed of five core proteins: the inner membrane proteins TolA, TolQ and TolR, the periplasmic protein TolB and the outer membrane protein Pal. They form a network linking the inner and outer membranes and the peptidoglycan layer.

Its subcellular location is the periplasm. Its function is as follows. Part of the Tol-Pal system, which plays a role in outer membrane invagination during cell division and is important for maintaining outer membrane integrity. This Anaeromyxobacter sp. (strain K) protein is Tol-Pal system protein TolB.